Reading from the N-terminus, the 1377-residue chain is Dicer-like protein 2 (1377 aa).

The Helicase ATP-binding domain occupies 23 to 203 (MFEASLKENI…MKTLESNLDS (181 aa)). 36–43 (MDTGTGKT) is a binding site for ATP. A DEAH box motif is present at residues 144 to 147 (DEAH). The Helicase C-terminal domain maps to 368–531 (ALINFLDKFD…AYQDEERRLR (164 aa)). In terms of domain architecture, Dicer dsRNA-binding fold spans 561 to 655 (VVTHLYHFCA…LPLTKNPEMR (95 aa)). 2 RNase III domains span residues 914-1052 (RLCA…LDGG) and 1092-1275 (DGDL…VDSG). Mg(2+)-binding residues include Glu1131, Asp1261, and Glu1264.

The protein belongs to the helicase family. Dicer subfamily. Mg(2+) is required as a cofactor. It depends on Mn(2+) as a cofactor.

In terms of biological role, dicer-like endonuclease involved in cleaving double-stranded RNA in the RNA interference (RNAi) pathway. Produces 21 to 25 bp dsRNAs (siRNAs) which target the selective destruction of homologous RNAs leading to sequence-specific suppression of gene expression, called post-transcriptional gene silencing (PTGS). Part of a broad host defense response against viral infection and transposons. The protein is Dicer-like protein 2 (dcl2) of Aspergillus oryzae (strain ATCC 42149 / RIB 40) (Yellow koji mold).